A 241-amino-acid polypeptide reads, in one-letter code: Small ribosomal subunit protein uS2 (241 aa).

Belongs to the universal ribosomal protein uS2 family.

The protein is Small ribosomal subunit protein uS2 of Yersinia pestis bv. Antiqua (strain Antiqua).